Consider the following 167-residue polypeptide: Phosphorelay intermediate protein YPD1 (167 aa).

Residues 24–129 (DSDFSKGLII…DDEEIKIQVD (106 aa)) form the HPt domain. Phosphohistidine is present on H64.

Belongs to the YPD1 family. As to quaternary structure, interacts with the response regulatory domains of SLN1 and SSK1. In terms of processing, the phosphorelay mechanism involves the sequential transfer of a phosphate group from 'His-576' (H1) to 'Asp-1144' (D1) of SLN1, then to His-64 (H2) of YPD1 and finally to 'Asp-554' (D2) of SSK1 or 'Asp-427' (D2) of SKN7.

It localises to the cytoplasm. It is found in the nucleus. Phosphorelay intermediate protein that is part of the branched SLN1-YPD1-SKN7/SSK1 two-component regulatory system, which controls activity of the HOG1 pathway and gene expression in response to changes in the osmolarity of the extracellular environment. Catalyzes the phosphoryl group transfer from the membrane-bound osmosensing histidine kinase SLN1 to two distinct response regulator proteins, SSK1 in the cytoplasm, and transcription factor SKN7 in the nucleus. The sequence is that of Phosphorelay intermediate protein YPD1 (YPD1) from Saccharomyces cerevisiae (strain ATCC 204508 / S288c) (Baker's yeast).